The chain runs to 239 residues: Small ribosomal subunit protein uS3 (239 aa).

Positions Arg40–Asn108 constitute a KH type-2 domain. The interval Lys212 to Glu239 is disordered. Residues Ala215–Pro226 show a composition bias toward basic and acidic residues. Residues Arg227–Glu239 are compositionally biased toward basic residues.

Belongs to the universal ribosomal protein uS3 family. In terms of assembly, part of the 30S ribosomal subunit. Forms a tight complex with proteins S10 and S14.

Functionally, binds the lower part of the 30S subunit head. Binds mRNA in the 70S ribosome, positioning it for translation. The sequence is that of Small ribosomal subunit protein uS3 (rpsC) from Thermus thermophilus (strain ATCC BAA-163 / DSM 7039 / HB27).